Reading from the N-terminus, the 272-residue chain is NADPH-dependent 7-cyano-7-deazaguanine reductase (272 aa).

Residue 80–82 (VES) coordinates substrate. Position 82–83 (82–83 (SK)) interacts with NADPH. C178 acts as the Thioimide intermediate in catalysis. The Proton donor role is filled by D185. 217 to 218 (AE) contacts substrate. An NADPH-binding site is contributed by 246-247 (RG).

Belongs to the GTP cyclohydrolase I family. QueF type 2 subfamily. Homodimer.

It localises to the cytoplasm. It carries out the reaction 7-aminomethyl-7-carbaguanine + 2 NADP(+) = 7-cyano-7-deazaguanine + 2 NADPH + 3 H(+). The protein operates within tRNA modification; tRNA-queuosine biosynthesis. Functionally, catalyzes the NADPH-dependent reduction of 7-cyano-7-deazaguanine (preQ0) to 7-aminomethyl-7-deazaguanine (preQ1). The sequence is that of NADPH-dependent 7-cyano-7-deazaguanine reductase from Rickettsia typhi (strain ATCC VR-144 / Wilmington).